The chain runs to 133 residues: Ribosome-binding factor A (133 aa).

This sequence belongs to the RbfA family. As to quaternary structure, monomer. Binds 30S ribosomal subunits, but not 50S ribosomal subunits or 70S ribosomes.

It localises to the cytoplasm. One of several proteins that assist in the late maturation steps of the functional core of the 30S ribosomal subunit. Associates with free 30S ribosomal subunits (but not with 30S subunits that are part of 70S ribosomes or polysomes). Required for efficient processing of 16S rRNA. May interact with the 5'-terminal helix region of 16S rRNA. The protein is Ribosome-binding factor A of Pseudomonas fluorescens (strain ATCC BAA-477 / NRRL B-23932 / Pf-5).